Here is a 98-residue protein sequence, read N- to C-terminus: Integration host factor subunit alpha (98 aa).

Residues 53–69 are compositionally biased toward basic and acidic residues; sequence DLREKNERPGRNPKTGE. Positions 53 to 72 are disordered; it reads DLREKNERPGRNPKTGEDIP.

This sequence belongs to the bacterial histone-like protein family. In terms of assembly, heterodimer of an alpha and a beta chain.

Its function is as follows. This protein is one of the two subunits of integration host factor, a specific DNA-binding protein that functions in genetic recombination as well as in transcriptional and translational control. In Vibrio atlanticus (strain LGP32) (Vibrio splendidus (strain Mel32)), this protein is Integration host factor subunit alpha.